Here is a 222-residue protein sequence, read N- to C-terminus: Probable translocation protein y4yL (222 aa).

4 helical membrane passes run 6–26 (PAIL…LAVV), 52–72 (PNIV…APVA), 158–178 (IGFL…TILM), and 182–202 (MSMV…FVAI).

It belongs to the FliP/MopC/SpaP family.

The protein resides in the cell membrane. Its function is as follows. Could be involved in the secretion of an unknown factor. This is Probable translocation protein y4yL from Sinorhizobium fredii (strain NBRC 101917 / NGR234).